The sequence spans 402 residues: Zinc finger protein 587B (402 aa).

The KRAB domain maps to 15-91 (VTFEDVAVKF…PVTGVSPKKA (77 aa)). The segment at 92–114 (HPCEMCGPILGDILHVADHQGTH) adopts a C2H2-type 1 zinc-finger fold. The C2H2-type 2; degenerate zinc finger occupies 120–142 (HRCEAWGNKLYDSGNFHQHQNEH). Residues K177, K200, and K253 each participate in a glycyl lysine isopeptide (Lys-Gly) (interchain with G-Cter in SUMO2) cross-link. C2H2-type zinc fingers lie at residues 242–264 (YVCC…QRVH), 270–292 (YECG…QQFH), 298–320 (YGCE…QKVH), 326–348 (YECG…QRIH), and 354–383 (YKCG…WVDH). A Glycyl lysine isopeptide (Lys-Gly) (interchain with G-Cter in SUMO2) cross-link involves residue K366.

The protein belongs to the krueppel C2H2-type zinc-finger protein family.

Its subcellular location is the nucleus. May be involved in transcriptional regulation. The polypeptide is Zinc finger protein 587B (ZNF587B) (Homo sapiens (Human)).